A 187-amino-acid polypeptide reads, in one-letter code: UPF0301 protein lpl0620 (187 aa).

The protein belongs to the UPF0301 (AlgH) family.

The protein is UPF0301 protein lpl0620 of Legionella pneumophila (strain Lens).